A 120-amino-acid chain; its full sequence is MKLSRKESVQRRHRRIRKKVNGTPNCPRLAVFRSNLHIYAQIIDDVGQHTIAAASTVEPDLKKSLSSGSTCEASAAVGKLVAERALAQGIEQVVFDRGGNLYHGRVKALADAAREAGLQF.

This sequence belongs to the universal ribosomal protein uL18 family. As to quaternary structure, part of the 50S ribosomal subunit; part of the 5S rRNA/L5/L18/L25 subcomplex. Contacts the 5S and 23S rRNAs.

Its function is as follows. This is one of the proteins that bind and probably mediate the attachment of the 5S RNA into the large ribosomal subunit, where it forms part of the central protuberance. This chain is Large ribosomal subunit protein uL18, found in Rippkaea orientalis (strain PCC 8801 / RF-1) (Cyanothece sp. (strain PCC 8801)).